A 370-amino-acid polypeptide reads, in one-letter code: Alpha-ketoglutarate-dependent dioxygenase cnsP (370 aa).

Residues 1–12 (MSTTTVITPGTI) are compositionally biased toward low complexity. Residues 1-20 (MSTTTVITPGTITREKNENG) are disordered. His131 is a substrate binding site. Residues His169 and Asp171 each contribute to the Fe cation site. Thr197 is a 2-oxoglutarate binding site. His321 serves as a coordination point for Fe cation. Residues Arg333 and Arg337 each contribute to the 2-oxoglutarate site. Arg337 lines the substrate pocket.

The protein belongs to the TfdA dioxygenase family. Fe(2+) is required as a cofactor.

It participates in alkaloid biosynthesis. Functionally, alpha-ketoglutarate-dependent dioxygenase; part of the gene cluster that mediates the biosynthesis of communesins, a prominent class of indole alkaloids with great potential as pharmaceuticals. Communesins are biosynthesized by the coupling of tryptamine and aurantioclavine, two building blocks derived from L-tryptophan. The L-tryptophan decarboxylase cnsB converts L-tryptophan to tryptamine, whereas the tryptophan dimethylallyltransferase cnsF converts L-tryptophan to 4-dimethylallyl tryptophan which is further transformed to aurantioclavine by the aurantioclavine synthase cnsA, probably aided by the catalase cnsD. The cytochrome P450 monooxygenase cnsC catalyzes the heterodimeric coupling between the two different indole moieties, tryptamine and aurantioclavine, to construct vicinal quaternary stereocenters and yield the heptacyclic communesin scaffold. The O-methyltransferase cnsE then methylates the communesin scaffold to produce communesin K, the simplest characterized communesin that contains the heptacyclic core. The dioxygenase cnsJ converts communesin K into communesin I. Acylation to introduce the hexadienyl group at position N16 of communesin I by the acyltransferase cnsK leads to the production of communesin B. The hexadienyl group is produced by the highly reducing polyketide synthase cnsI, before being hydrolytically removed from cnsI by the serine hydrolase cnsH, converted into hexadienyl-CoA by the CoA ligase cnsG, and then transferred to communesin I by cnsK. Surprisingly, cnsK may also be a promiscuous acyltransferase that can tolerate a range of acyl groups, including acetyl-, propionyl-, and butyryl-CoA, which lead to communesins A, G and H respectively. The roles of the alpha-ketoglutarate-dependent dioxygenases cnsM and cnsP have still to be determined. The polypeptide is Alpha-ketoglutarate-dependent dioxygenase cnsP (Penicillium expansum (Blue mold rot fungus)).